Reading from the N-terminus, the 341-residue chain is tRNA N6-adenosine threonylcarbamoyltransferase (341 aa).

Positions 115 and 119 each coordinate Fe cation. Substrate-binding positions include 138 to 142, Asp-171, Gly-184, Asp-188, and Asn-279; that span reads VVSGG. Asp-307 serves as a coordination point for Fe cation.

This sequence belongs to the KAE1 / TsaD family. Fe(2+) is required as a cofactor.

It is found in the cytoplasm. The enzyme catalyses L-threonylcarbamoyladenylate + adenosine(37) in tRNA = N(6)-L-threonylcarbamoyladenosine(37) in tRNA + AMP + H(+). Functionally, required for the formation of a threonylcarbamoyl group on adenosine at position 37 (t(6)A37) in tRNAs that read codons beginning with adenine. Is involved in the transfer of the threonylcarbamoyl moiety of threonylcarbamoyl-AMP (TC-AMP) to the N6 group of A37, together with TsaE and TsaB. TsaD likely plays a direct catalytic role in this reaction. This chain is tRNA N6-adenosine threonylcarbamoyltransferase, found in Clostridium kluyveri (strain NBRC 12016).